The chain runs to 319 residues: tRNA-modifying protein YgfZ (319 aa).

Folate contacts are provided by W27 and W189.

It belongs to the tRNA-modifying YgfZ family.

It is found in the cytoplasm. Functionally, folate-binding protein involved in regulating the level of ATP-DnaA and in the modification of some tRNAs. It is probably a key factor in regulatory networks that act via tRNA modification, such as initiation of chromosomal replication. In Buchnera aphidicola subsp. Schizaphis graminum (strain Sg), this protein is tRNA-modifying protein YgfZ.